The following is a 282-amino-acid chain: Energy-coupling factor transporter ATP-binding protein EcfA2 (282 aa).

The region spanning 1-234 is the ABC transporter domain; sequence MKGSPFEKVA…ADELVALGLD (234 aa). 28–35 is an ATP binding site; the sequence is GHTGSGKS.

The protein belongs to the ABC transporter superfamily. Energy-coupling factor EcfA family. Forms a stable energy-coupling factor (ECF) transporter complex composed of 2 membrane-embedded substrate-binding proteins (S component), 2 ATP-binding proteins (A component) and 2 transmembrane proteins (T component).

The protein localises to the cell membrane. In terms of biological role, ATP-binding (A) component of a common energy-coupling factor (ECF) ABC-transporter complex. Unlike classic ABC transporters this ECF transporter provides the energy necessary to transport a number of different substrates. The chain is Energy-coupling factor transporter ATP-binding protein EcfA2 from Halalkalibacterium halodurans (strain ATCC BAA-125 / DSM 18197 / FERM 7344 / JCM 9153 / C-125) (Bacillus halodurans).